Consider the following 256-residue polypeptide: uncharacterized protein (256 aa).

The next 4 membrane-spanning stretches (helical) occupy residues Phe-5 to Leu-25, Ile-30 to Phe-50, Val-64 to Ile-84, and Val-105 to Ile-125. The interval Glu-198 to Ser-256 is disordered. A compositionally biased stretch (low complexity) spans Leu-203–Lys-215. 2 positions are modified to phosphoserine: Ser-210 and Ser-211.

The protein localises to the endoplasmic reticulum membrane. The protein resides in the nucleus membrane. This is an uncharacterized protein from Schizosaccharomyces pombe (strain 972 / ATCC 24843) (Fission yeast).